A 377-amino-acid chain; its full sequence is SH2/SH3 adapter protein NCK1 (377 aa).

The residue at position 2 (Ala2) is an N-acetylalanine. In terms of domain architecture, SH3 1 spans 2 to 61 (AEEVVVVAKFDYVAQQEQELDIKKNERLWLLDDSKSWWRVRNSMNKTGFVPSNYVERKNS). Residues Ser85, Ser89, Ser91, and Ser96 each carry the phosphoserine modification. Phosphotyrosine is present on Tyr105. One can recognise an SH3 2 domain in the interval 106 to 165 (DLNMPAYVKFNYMAEREDELSLIKGTKVIVMEKCSDGWWRGSYNGQVGWFPSNYVTEEGD). At Ser166 the chain carries Phosphoserine. The SH3 3 domain maps to 190–252 (QVLHVVQALY…PKNYVTVMQN (63 aa)). Residues 282 to 376 (WYYGKVTRHQ…GEKLYLVKHL (95 aa)) form the SH2 domain.

In terms of assembly, interacts (via SH2 domain and SH3 domain 2) with EGFR. Interacts with PAK1 and SOS1. Interacts (via SH3 domains) with PKN2. Associates with BLNK, PLCG1, VAV1 and NCK1 in a B-cell antigen receptor-dependent fashion. Interacts with SOCS7. This interaction is required for nuclear import. Part of a complex containing PPP1R15B, PP1 and NCK1. Interacts with RALGPS1. Interacts with CAV2 (tyrosine phosphorylated form). Interacts with ADAM15. Interacts with FASLG. Directly interacts with RASA1. Interacts with isoform 4 of MINK1. Interacts with FLT1 (tyrosine phosphorylated). Interacts with KDR (tyrosine phosphorylated). Interacts (via SH2 domain) with EPHB1; activates the JUN cascade to regulate cell adhesion. Interacts with EPHA2. Interacts (via SH2 domain) with PDGFRB (tyrosine phosphorylated). Interacts with the inactive form of EIF2AK2/PKR. Interacts with PTPN1. Interacts with INSR/insulin receptor (in response to insulin stimulation); This interaction may mediate PTPN1 recruitment leading to INSR dephosphorylation. Interacts with IRS1. Post-translationally, phosphorylated on Ser and Tyr residues. Phosphorylated in response to activation of EGFR and FcERI. Phosphorylated by activated PDGFRB.

The protein localises to the cytoplasm. Its subcellular location is the endoplasmic reticulum. The protein resides in the nucleus. Its function is as follows. Adapter protein which associates with tyrosine-phosphorylated growth factor receptors, such as KDR and PDGFRB, or their cellular substrates. Maintains low levels of EIF2S1 phosphorylation by promoting its dephosphorylation by PP1. Plays a role in the DNA damage response, not in the detection of the damage by ATM/ATR, but for efficient activation of downstream effectors, such as that of CHEK2. Plays a role in ELK1-dependent transcriptional activation in response to activated Ras signaling. Modulates the activation of EIF2AK2/PKR by dsRNA. May play a role in cell adhesion and migration through interaction with ephrin receptors. This is SH2/SH3 adapter protein NCK1 (NCK1) from Homo sapiens (Human).